A 405-amino-acid chain; its full sequence is Replication factor C large subunit (405 aa).

Position 47 to 54 (47 to 54 (GPPGVGKT)) interacts with ATP.

This sequence belongs to the activator 1 small subunits family. RfcL subfamily. In terms of assembly, heteromultimer composed of small subunits (RfcS) and large subunits (RfcL).

Part of the RFC clamp loader complex which loads the PCNA sliding clamp onto DNA. The chain is Replication factor C large subunit from Saccharolobus islandicus (strain Y.N.15.51 / Yellowstone #2) (Sulfolobus islandicus).